The following is a 194-amino-acid chain: Leucyl/phenylalanyl-tRNA--protein transferase (194 aa).

The protein belongs to the L/F-transferase family.

Its subcellular location is the cytoplasm. It catalyses the reaction N-terminal L-lysyl-[protein] + L-leucyl-tRNA(Leu) = N-terminal L-leucyl-L-lysyl-[protein] + tRNA(Leu) + H(+). The catalysed reaction is N-terminal L-arginyl-[protein] + L-leucyl-tRNA(Leu) = N-terminal L-leucyl-L-arginyl-[protein] + tRNA(Leu) + H(+). The enzyme catalyses L-phenylalanyl-tRNA(Phe) + an N-terminal L-alpha-aminoacyl-[protein] = an N-terminal L-phenylalanyl-L-alpha-aminoacyl-[protein] + tRNA(Phe). Functions in the N-end rule pathway of protein degradation where it conjugates Leu, Phe and, less efficiently, Met from aminoacyl-tRNAs to the N-termini of proteins containing an N-terminal arginine or lysine. This is Leucyl/phenylalanyl-tRNA--protein transferase from Chlorobaculum parvum (strain DSM 263 / NCIMB 8327) (Chlorobium vibrioforme subsp. thiosulfatophilum).